The chain runs to 90 residues: MDSKDQTMFYNFGDDSIEEDVKKLMKQVYVALEEKGYNPVNQIVGYLLSGDPAYIPRHKDARSMIRRLERDEIIEELVKAYLKNNEIGEK.

This sequence belongs to the UPF0297 family.

The chain is UPF0297 protein lmo1503 from Listeria monocytogenes serovar 1/2a (strain ATCC BAA-679 / EGD-e).